The chain runs to 329 residues: Serine dehydratase-like (329 aa).

Residue methionine 1 is modified to N-acetylmethionine. Lysine 48 carries the post-translational modification N6-(pyridoxal phosphate)lysine.

It belongs to the serine/threonine dehydratase family. As to quaternary structure, monomer. Homodimer. It depends on pyridoxal 5'-phosphate as a cofactor. In terms of tissue distribution, expressed in lung cancer cell lines.

It carries out the reaction L-serine = pyruvate + NH4(+). It catalyses the reaction L-threonine = 2-oxobutanoate + NH4(+). The enzyme catalyses L-glutamate = D-glutamate. In terms of biological role, catalyzes the pyridoxal-phosphate-dependent dehydrative deamination of L-threonine and L-serine to ammonia and alpha-ketobutyrate and pyruvate, respectively. Also exhibits racemase activity towards L-glutamate and D-glutamate. The sequence is that of Serine dehydratase-like (SDSL) from Homo sapiens (Human).